The sequence spans 377 residues: tRNA-specific 2-thiouridylase MnmA (377 aa).

ATP contacts are provided by residues 8–15 (GMSGGVDS) and M34. Residues 94–96 (NPD) form an interaction with target base in tRNA region. C99 acts as the Nucleophile in catalysis. A disulfide bond links C99 and C201. G123 is a binding site for ATP. An interaction with tRNA region spans residues 151 to 153 (KDQ). The Cysteine persulfide intermediate role is filled by C201. The interval 315 to 316 (RY) is interaction with tRNA.

The protein belongs to the MnmA/TRMU family.

It is found in the cytoplasm. The catalysed reaction is S-sulfanyl-L-cysteinyl-[protein] + uridine(34) in tRNA + AH2 + ATP = 2-thiouridine(34) in tRNA + L-cysteinyl-[protein] + A + AMP + diphosphate + H(+). Its function is as follows. Catalyzes the 2-thiolation of uridine at the wobble position (U34) of tRNA, leading to the formation of s(2)U34. In Acinetobacter baumannii (strain ACICU), this protein is tRNA-specific 2-thiouridylase MnmA.